Here is an 883-residue protein sequence, read N- to C-terminus: Coatomer subunit gamma (883 aa).

Positions 1–25 (MNYFSLTSHKKHRGHPSAGPSNAYQ) are disordered. HEAT repeat units follow at residues 69-106 (REAT…IAED), 292-329 (RMLS…THPA), 331-364 (VTTC…GAES), 365-401 (SVER…KYPR), 404-439 (TVLM…ENAD), and 476-513 (ATPS…SCPA).

Belongs to the COPG family. As to quaternary structure, oligomeric complex that consists of at least the alpha, beta, beta', gamma, delta, epsilon and zeta subunits. In terms of tissue distribution, expressed in ovary, testis, testis tip, young spermatocytes, germ cells and follicle cells. Up-regulated expression within centrally to posteriorly located germarial cysts and in migrating follicle cells. Widespread expression in imaginal disks including eye-antennal disk, wing disk, third leg and haltere disk.

It is found in the cytoplasm. It localises to the golgi apparatus membrane. Its subcellular location is the cytoplasmic vesicle. The protein localises to the COPI-coated vesicle membrane. The protein resides in the endoplasmic reticulum. The coatomer is a cytosolic protein complex that binds to dilysine motifs and reversibly associates with Golgi non-clathrin-coated vesicles, which further mediate biosynthetic protein transport from the ER, via the Golgi up to the trans Golgi network. Coatomer complex is required for budding from Golgi membranes, and is essential for the retrograde Golgi-to-ER transport of dilysine-tagged proteins. Required for limiting lipid storage in lipid droplets. Involved in the expansion of luminal extracellular matrices and apical membrane during tubulogenesis. Required in the tracheal epithelium for luminal protein secretion and diametric tube growth. In salivary glands, required for deposition of O-glycans and luminal extracellular matrix assembly. Required for epidermal morphogenesis and cuticle development. The protein is Coatomer subunit gamma of Drosophila melanogaster (Fruit fly).